The primary structure comprises 163 residues: MPSFDIVSEITLYEIRNAVENANRVLSTRYDFRGVEATIELNEKAETIKVTTESDFQLEQLIEILISACVKRDIQHNSLDIPADSEHSGKLYSKEIKLKQGIETDMAKKIIKLIKDAKLKVQTQIQGEQVRVSGKSRDDLQATIQLVKNAELGQPFQFNNFRD.

It belongs to the YajQ family.

Its function is as follows. Nucleotide-binding protein. In Histophilus somni (strain 129Pt) (Haemophilus somnus), this protein is Nucleotide-binding protein HS_0688.